Here is a 914-residue protein sequence, read N- to C-terminus: Isoleucine--tRNA ligase (914 aa).

Positions 57–67 match the 'HIGH' region motif; that stretch reads PYANGQIHMGH. E554 lines the L-isoleucyl-5'-AMP pocket. The 'KMSKS' region motif lies at 595 to 599; it reads KMSKS. ATP is bound at residue K598. C883, C886, C904, and C907 together coordinate Zn(2+).

It belongs to the class-I aminoacyl-tRNA synthetase family. IleS type 1 subfamily. Monomer. Requires Zn(2+) as cofactor.

The protein resides in the cytoplasm. The catalysed reaction is tRNA(Ile) + L-isoleucine + ATP = L-isoleucyl-tRNA(Ile) + AMP + diphosphate. Its function is as follows. Catalyzes the attachment of isoleucine to tRNA(Ile). As IleRS can inadvertently accommodate and process structurally similar amino acids such as valine, to avoid such errors it has two additional distinct tRNA(Ile)-dependent editing activities. One activity is designated as 'pretransfer' editing and involves the hydrolysis of activated Val-AMP. The other activity is designated 'posttransfer' editing and involves deacylation of mischarged Val-tRNA(Ile). This is Isoleucine--tRNA ligase from Macrococcus caseolyticus (strain JCSC5402) (Macrococcoides caseolyticum).